Here is a 102-residue protein sequence, read N- to C-terminus: Small ribosomal subunit protein uS10 (102 aa).

Belongs to the universal ribosomal protein uS10 family. In terms of assembly, part of the 30S ribosomal subunit.

Functionally, involved in the binding of tRNA to the ribosomes. The polypeptide is Small ribosomal subunit protein uS10 (Methylorubrum populi (strain ATCC BAA-705 / NCIMB 13946 / BJ001) (Methylobacterium populi)).